The following is a 740-amino-acid chain: Ion-translocating oxidoreductase complex subunit C (740 aa).

2 4Fe-4S ferredoxin-type domains span residues 369–397 and 407–436; these read GEPQEEQSCIRCSACADACPADLLPQQLY and KATTHNIADCIECGACAWVCPSNIPLVQYF. 8 residues coordinate [4Fe-4S] cluster: Cys377, Cys380, Cys383, Cys387, Cys416, Cys419, Cys422, and Cys426. A disordered region spans residues 602–684; the sequence is KLEQQQANAE…EPEEQVDPRK (83 aa). Composition is skewed to low complexity over residues 605-615 and 637-647; these read QQQANAEPEQQ.

It belongs to the 4Fe4S bacterial-type ferredoxin family. RnfC subfamily. The complex is composed of six subunits: RsxA, RsxB, RsxC, RsxD, RsxE and RsxG. The cofactor is [4Fe-4S] cluster.

Its subcellular location is the cell inner membrane. Part of a membrane-bound complex that couples electron transfer with translocation of ions across the membrane. Required to maintain the reduced state of SoxR. This is Ion-translocating oxidoreductase complex subunit C from Escherichia coli O7:K1 (strain IAI39 / ExPEC).